The following is a 159-amino-acid chain: Ribosomal RNA large subunit methyltransferase H (159 aa).

S-adenosyl-L-methionine is bound by residues leucine 76, glycine 108, and 127–132 (FSRMTF).

This sequence belongs to the RNA methyltransferase RlmH family. As to quaternary structure, homodimer.

The protein localises to the cytoplasm. It catalyses the reaction pseudouridine(1915) in 23S rRNA + S-adenosyl-L-methionine = N(3)-methylpseudouridine(1915) in 23S rRNA + S-adenosyl-L-homocysteine + H(+). Its function is as follows. Specifically methylates the pseudouridine at position 1915 (m3Psi1915) in 23S rRNA. In Clostridioides difficile (strain 630) (Peptoclostridium difficile), this protein is Ribosomal RNA large subunit methyltransferase H.